The sequence spans 413 residues: Probable protein phosphatase 2C 78 (413 aa).

A disordered region spans residues Lys-21–Arg-40. Positions Lys-111 to Leu-409 constitute a PPM-type phosphatase domain. Positions 153, 154, 327, and 400 each coordinate Mn(2+).

The protein belongs to the PP2C family. It depends on Mg(2+) as a cofactor. Mn(2+) is required as a cofactor.

Its subcellular location is the golgi apparatus. The protein localises to the nucleus. The catalysed reaction is O-phospho-L-seryl-[protein] + H2O = L-seryl-[protein] + phosphate. It carries out the reaction O-phospho-L-threonyl-[protein] + H2O = L-threonyl-[protein] + phosphate. Acts as a negative regulator of abscisic acid (ABA) signaling for stomatal closure in leaves, and controls water loss during leaf senescence. Activated by the NAC029/NAP transcription factor during ABA signaling in senescing leaves. Functions as a negative regulator of osmotic stress and ABA signaling. Acts as a negative regulator of response to drought. This Arabidopsis thaliana (Mouse-ear cress) protein is Probable protein phosphatase 2C 78.